The primary structure comprises 375 residues: Acetylornithine aminotransferase (375 aa).

Residues 93–94 (GT) and Phe120 contribute to the pyridoxal 5'-phosphate site. Position 123 (Arg123) interacts with N(2)-acetyl-L-ornithine. 205 to 208 (DEVQ) contributes to the pyridoxal 5'-phosphate binding site. An N6-(pyridoxal phosphate)lysine modification is found at Lys234. A N(2)-acetyl-L-ornithine-binding site is contributed by Thr262. Pyridoxal 5'-phosphate is bound at residue Thr263.

Belongs to the class-III pyridoxal-phosphate-dependent aminotransferase family. ArgD subfamily. As to quaternary structure, homodimer. Pyridoxal 5'-phosphate serves as cofactor.

It localises to the cytoplasm. It carries out the reaction N(2)-acetyl-L-ornithine + 2-oxoglutarate = N-acetyl-L-glutamate 5-semialdehyde + L-glutamate. Its pathway is amino-acid biosynthesis; L-arginine biosynthesis; N(2)-acetyl-L-ornithine from L-glutamate: step 4/4. This Staphylococcus epidermidis (strain ATCC 12228 / FDA PCI 1200) protein is Acetylornithine aminotransferase.